Reading from the N-terminus, the 432-residue chain is Acyl-CoA dehydrogenase AFT10-1 (432 aa).

This sequence belongs to the acyl-CoA dehydrogenase family. Requires FAD as cofactor.

It functions in the pathway mycotoxin biosynthesis. Its function is as follows. Acyl-CoA dehydrogenase; part of the gene clusters that mediate the biosynthesis of the host-selective toxins (HSTs) AF-toxins responsible for Alternaria black spot of strawberry disease by the strawberry pathotype. AF-toxin I and III are valine derivatives of 2,3-dyhydroxy-isovaleric acid and 2-hydroxy-isovaleric acid respectively, while AF II is an isoleucine derivative of 2-hydroxy-valeric acid. These derivatives are bound to a 9,10-epoxy-8-hydroxy-9-methyl-decatrienoic acid (EDA) moiety. On cellular level, AF-toxins affect plasma membrane of susceptible cells and cause a sudden increase in loss of K(+) after a few minutes of toxin treatment. The aldo-keto reductase AFTS1 catalyzes the conversion of 2-keto-isovaleric acid (2-KIV) to 2-hydroxy-isovaleric acid (2-HIV) by reduction of its ketone to an alcohol. The acyl-CoA ligase AFT1, the hydrolase AFT2 and the enoyl-CoA hydratases AFT3 and AFT6, but also the polyketide synthase AFT9, the acyl-CoA dehydrogenase AFT10, the cytochrome P450 monooxygenase AFT11 and the oxidoreductase AFT12 are all involved in the biosynthesis of the AK-, AF- and ACT-toxin common EDA structural moiety. The exact function of each enzyme, and of additional enzymes identified within the AF-toxin clusters have still to be determined. The chain is Acyl-CoA dehydrogenase AFT10-1 from Alternaria alternata (Alternaria rot fungus).